Reading from the N-terminus, the 235-residue chain is Peptidase E (235 aa).

Residues Ser122, Asp137, and His159 each act as charge relay system in the active site.

The protein belongs to the peptidase S51 family.

Its subcellular location is the cytoplasm. It carries out the reaction Dipeptidase E catalyzes the hydrolysis of dipeptides Asp-|-Xaa. It does not act on peptides with N-terminal Glu, Asn or Gln, nor does it cleave isoaspartyl peptides.. Hydrolyzes dipeptides containing N-terminal aspartate residues. May play a role in allowing the cell to use peptide aspartate to spare carbon otherwise required for the synthesis of the aspartate family of amino acids. The chain is Peptidase E from Shewanella denitrificans (strain OS217 / ATCC BAA-1090 / DSM 15013).